A 139-amino-acid polypeptide reads, in one-letter code: Large-conductance mechanosensitive channel (139 aa).

3 helical membrane-spanning segments follow: residues 16–36 (VIDL…VKAL), 40–60 (IVMP…LAWV), and 79–99 (GAFI…FMLV).

The protein belongs to the MscL family. As to quaternary structure, homopentamer.

It localises to the cell inner membrane. Channel that opens in response to stretch forces in the membrane lipid bilayer. May participate in the regulation of osmotic pressure changes within the cell. The protein is Large-conductance mechanosensitive channel of Phenylobacterium zucineum (strain HLK1).